The following is a 300-amino-acid chain: uncharacterized protein (300 aa).

The N-terminal stretch at 1–20 is a signal peptide; the sequence is MRLLISCILILSILVNFISG. At 21–279 the chain is on the extracellular side; that stretch reads HAVLVAPTPF…PCSIYGDGNG (259 aa). Residues Asn-56, Asn-217, and Asn-278 are each glycosylated (N-linked (GlcNAc...) asparagine). A helical transmembrane segment spans residues 280-300; it reads SNLIIIPTLLIISILSLILMF.

The protein resides in the membrane. This is an uncharacterized protein from Dictyostelium discoideum (Social amoeba).